Here is a 60-residue protein sequence, read N- to C-terminus: Large ribosomal subunit protein uL30 (60 aa).

The protein belongs to the universal ribosomal protein uL30 family. In terms of assembly, part of the 50S ribosomal subunit.

The sequence is that of Large ribosomal subunit protein uL30 from Shewanella loihica (strain ATCC BAA-1088 / PV-4).